Here is a 420-residue protein sequence, read N- to C-terminus: Glutamyl-tRNA reductase (420 aa).

Substrate is bound by residues 49 to 52, Ser110, 115 to 117, and Gln121; these read TCNR and EHQ. Cys50 functions as the Nucleophile in the catalytic mechanism. 190-195 is an NADP(+) binding site; that stretch reads GSGTIN.

The protein belongs to the glutamyl-tRNA reductase family. Homodimer.

It carries out the reaction (S)-4-amino-5-oxopentanoate + tRNA(Glu) + NADP(+) = L-glutamyl-tRNA(Glu) + NADPH + H(+). Its pathway is porphyrin-containing compound metabolism; protoporphyrin-IX biosynthesis; 5-aminolevulinate from L-glutamyl-tRNA(Glu): step 1/2. Catalyzes the NADPH-dependent reduction of glutamyl-tRNA(Glu) to glutamate 1-semialdehyde (GSA). The sequence is that of Glutamyl-tRNA reductase from Wigglesworthia glossinidia brevipalpis.